We begin with the raw amino-acid sequence, 100 residues long: MAKKSMIQREKKRERLVAKYGKKRDEIKKALKSVTSYKDRLDLYAKLEKLPRNSFPSRLRNRCWLTGRTRGYYRQFGLSRHVLREMAHQCLLPGVVKSSW.

The protein belongs to the universal ribosomal protein uS14 family. Part of the 30S ribosomal subunit.

It localises to the plastid. The protein localises to the chloroplast. In terms of biological role, binds 16S rRNA, required for the assembly of 30S particles. This chain is Small ribosomal subunit protein uS14c, found in Rhodomonas salina (Cryptomonas salina).